The chain runs to 490 residues: Aspartyl/glutamyl-tRNA(Asn/Gln) amidotransferase subunit B (490 aa).

This sequence belongs to the GatB/GatE family. GatB subfamily. As to quaternary structure, heterotrimer of A, B and C subunits.

It carries out the reaction L-glutamyl-tRNA(Gln) + L-glutamine + ATP + H2O = L-glutaminyl-tRNA(Gln) + L-glutamate + ADP + phosphate + H(+). It catalyses the reaction L-aspartyl-tRNA(Asn) + L-glutamine + ATP + H2O = L-asparaginyl-tRNA(Asn) + L-glutamate + ADP + phosphate + 2 H(+). Functionally, allows the formation of correctly charged Asn-tRNA(Asn) or Gln-tRNA(Gln) through the transamidation of misacylated Asp-tRNA(Asn) or Glu-tRNA(Gln) in organisms which lack either or both of asparaginyl-tRNA or glutaminyl-tRNA synthetases. The reaction takes place in the presence of glutamine and ATP through an activated phospho-Asp-tRNA(Asn) or phospho-Glu-tRNA(Gln). The chain is Aspartyl/glutamyl-tRNA(Asn/Gln) amidotransferase subunit B from Prochlorococcus marinus (strain MIT 9515).